We begin with the raw amino-acid sequence, 743 residues long: MFHFNRCQHLKKITQKCFSSIHVKTDKHAQQFLSRTFALAELRKSWYSTHSLVGDKNIILMGPPGAGKTTVGRIIGQKLGCCVIDVDDDILEKTWNMSVSEKLQDVGNEQFLEEEGKAVLNFSASGSVISLTGSNPMHDASMWHLKKNGVIVYLDVPLLDLIHRLKLMKIDRIVGRNSGTSMKDLLKFRRQYYKKWYDARVFCESGASPEEVADKVLNAIKRYQDVDSETFISTRHVWPKDCEQKVSAKFFSEAVIEGLASDGGLFVPAKEFPKLSCGEWKSLVGATYIERAQILLERCIHPADIPAARLGEMIETAYGENFACSKIAPVRHLSGNQFILELFHGPTGSFKDLSLQLMPHIFAHCIPPSCNYMILVATSGDTGSAVLNGFSRLNKNDKQRIAVVTFFPENGVSDFQKAQIIGSQRENGWAVGVESDFDFCQTAIKRIFNDSDFTGFLTVEYGTILSSANSINWGRLLPQVVYHASAYLDLVSQGFISFGSPVDVCIPTGNFGNILAAVYAKMMGIPIRKFICASNQNRVLTDFIKTGHYDLRERKLAQTFSPSIDILKSSNLERHLHLMANKDGQLMTELFNQLESQHHFQIEKVLVEKLQQDFVADWCSEGECLAAINSTYNTSGYILDPHTAVAKVVADRVQDKTCPVIVSSTAHYSKFAPAIMQALKIKEINETSSSQLYLLGSYNALPPLHEALLERTKQQEKMEYQVCAADMNVLKSHVEKLIQNQFI.

The residue at position 281 (Lys281) is an N6-acetyllysine. Lys351 bears the N6-(pyridoxal phosphate)lysine mark.

Belongs to the threonine synthase family. Pyridoxal 5'-phosphate is required as a cofactor.

The polypeptide is Threonine synthase-like 1 (THNSL1) (Macaca fascicularis (Crab-eating macaque)).